The chain runs to 134 residues: MDLRTGEYITAHQATSGVYTFEITNPLYFTITRHNQQPFNSKYNFLTFQIRFNHNLRKALGIHKCFLNFRIWTTLQSPTGHFLRVFRYQVYKYLNNIGVISLNNVIRAVDYVLFDVFENTIDVIEQHEIKYNLY.

Belongs to the geminiviridae replication enhancer protein family. In terms of assembly, homooligomer. Interacts with the replication-associated protein (REP). Interacts with host proliferating cell nuclear antigen (PCNA). Interacts with host retinoblastoma-related protein 1 (RBR1), and may thereby deregulate the host cell cycle. Oligomerization and interaction with PCNA are necessary for optimal replication enhancement.

In terms of biological role, increases viral DNA accumulation. Enhances infectivity and symptom expression. The polypeptide is Replication enhancer protein (Cynanchum acutum (Tomato)).